The chain runs to 320 residues: Ferrochelatase (320 aa).

His-194 and Glu-275 together coordinate Fe cation.

The protein belongs to the ferrochelatase family. Monomer.

Its subcellular location is the cytoplasm. It catalyses the reaction heme b + 2 H(+) = protoporphyrin IX + Fe(2+). Its pathway is porphyrin-containing compound metabolism; protoheme biosynthesis; protoheme from protoporphyrin-IX: step 1/1. In terms of biological role, catalyzes the ferrous insertion into protoporphyrin IX. In Escherichia coli (strain K12 / MC4100 / BW2952), this protein is Ferrochelatase.